The primary structure comprises 359 residues: Guanine nucleotide-binding protein G(o) subunit alpha (359 aa).

The segment at 1–26 (MGGCVSATPEEREAKTRSSVIDRQQR) is disordered. A lipid anchor (N-myristoyl glycine) is attached at Gly2. A lipid anchor (S-palmitoyl cysteine) is attached at Cys4. The G-alpha domain occupies 34–359 (NTIKILLLGA…RENLEAANLL (326 aa)). Positions 37 to 50 (KILLLGAGESGKST) are G1 motif. GTP is bound by residues 42-49 (GAGESGKS), 178-184 (LRSRVQT), 203-207 (DVGGQ), 272-275 (NKAD), and Ala331. Residues Ser49 and Thr184 each contribute to the Mg(2+) site. The tract at residues 176-184 (DVLRSRVQT) is G2 motif. The interval 199–208 (YRVVDVGGQR) is G3 motif. A G4 motif region spans residues 268-275 (ILFLNKAD). The G5 motif stretch occupies residues 329 to 334 (TTATDT).

This sequence belongs to the G-alpha family. G(i/o/t/z) subfamily. In terms of assembly, g proteins are composed of 3 units; alpha, beta and gamma. The alpha chain contains the guanine nucleotide binding site.

Functionally, guanine nucleotide-binding proteins (G proteins) are involved as modulators or transducers in various transmembrane signaling systems. The G(o) protein function is not clear. The protein is Guanine nucleotide-binding protein G(o) subunit alpha of Geodia cydonium (Sponge).